We begin with the raw amino-acid sequence, 139 residues long: uncharacterized protein (139 aa).

Residues 1-11 (MALSMSLSSDI) are compositionally biased toward polar residues. Disordered regions lie at residues 1–80 (MALS…AAAA) and 100–139 (ASSP…LARS). Low complexity predominate over residues 63–80 (GAGSASAGGSRLAAAAAA).

This is an uncharacterized protein from Homo sapiens (Human).